A 112-amino-acid chain; its full sequence is Omega-agatoxin-1A (112 aa).

An N-terminal signal peptide occupies residues 1–19; that stretch reads MMKFVVFLACLFVAAHSFA. Positions 20 to 36 are excised as a propeptide; it reads VEGEEEYFEAEVPELER. A propeptide spans 103–109 (glu-rich); it reads RSEESER.

Belongs to the neurotoxin 04 (omega-agtx) family. 01 (type I omega-agtx) subfamily. As to quaternary structure, heterodimer of two subunits, a major chain and a minor chain, linked by a disulfide bond. In terms of processing, proteolytically processed to yield the major and the minor chains. As to expression, expressed by the venom gland.

The protein localises to the secreted. Omega-agatoxins are antagonists of voltage-gated calcium channels. They block insect neuromuscular transmission presynaptically. This toxin is a blocker of L-type calcium channels (Cav/CACNA1). This chain is Omega-agatoxin-1A, found in Agelenopsis aperta (North American funnel-web spider).